Reading from the N-terminus, the 106-residue chain is MPRPHQRTRSLRRVYVRTPGGETKIHYEKRRPGPARCAICGRPLNGVPRLRPVELRKLPKTAKRPERMYGGVLCAECLEKLLKKSIRSQVLAQLEQLRRSVAAGQS.

This sequence belongs to the eukaryotic ribosomal protein eL34 family.

This Hyperthermus butylicus (strain DSM 5456 / JCM 9403 / PLM1-5) protein is Large ribosomal subunit protein eL34.